The chain runs to 329 residues: Phosphoenolpyruvate transferase (329 aa).

A 7,8-didemethyl-8-hydroxy-5-deazariboflavin-binding site is contributed by aspartate 61.

It belongs to the CofD family. As to quaternary structure, homodimer. Mg(2+) serves as cofactor.

It catalyses the reaction enolpyruvoyl-2-diphospho-5'-guanosine + 7,8-didemethyl-8-hydroxy-5-deazariboflavin = dehydro coenzyme F420-0 + GMP + H(+). It functions in the pathway cofactor biosynthesis; coenzyme F420 biosynthesis. Its function is as follows. Catalyzes the transfer of the phosphoenolpyruvate moiety from enoylpyruvoyl-2-diphospho-5'-guanosine (EPPG) to 7,8-didemethyl-8-hydroxy-5-deazariboflavin (FO) with the formation of dehydro coenzyme F420-0 and GMP. In Mycobacterium ulcerans (strain Agy99), this protein is Phosphoenolpyruvate transferase.